A 75-amino-acid chain; its full sequence is Brevinin-2HS2A (75 aa).

A signal peptide spans 1-22 (MFTLKKPLLLLFFLGTISLSLC). Positions 23 to 40 (QEERDADEEEGEMIEEEV) are excised as a propeptide. The cysteines at positions 69 and 75 are disulfide-linked.

This sequence belongs to the frog skin active peptide (FSAP) family. Brevinin subfamily. In terms of tissue distribution, expressed by the skin glands.

The protein resides in the secreted. In terms of biological role, has antimicrobial activity against some Gram-positive bacteria and fungi but has no activity against a range of Gram-negative bacteria except P.faecalis. Has antimicrobial activity against the Gram-positive bacteria S.aureus ATCC 25923 (MIC=19 uM), B.licheniformis X39 (MIC=37.5 uM) and R.rhodochrous X15 (MIC=9.5 uM), is virtually inactive against E.faecium 091299 (MIC=150 uM) and S.carnosus KHS (MIC=150 uM) and inactive against E.faecalis 981. Active against the Gram-negative bacterium P.faecalis X29 (MIC=9.5 uM) and is inactive against E.coli, P.aeruginosa and S.typhi. Active against C.albicans ATCC 2002 (MIC=19 uM) and is also active against the slime mold 090223 (MIC=37.5 uM). Has extremely low hemolytic activity against human erythrocytes (LC(50)=300 uM). In Odorrana hainanensis (Odor frog), this protein is Brevinin-2HS2A.